The chain runs to 578 residues: Probable ATP-dependent RNA helicase DDX55 homolog (578 aa).

A Q motif motif is present at residues 7–37 (PVALKTFREKLGPELLEVFDKSYKSFTDVQV). Residues 40–218 (GTHLLNLSDV…VFGLRNAKQV (179 aa)) enclose the Helicase ATP-binding domain. 53–60 (SPTGSGKT) contributes to the ATP binding site. The DEAD box motif lies at 166 to 169 (DEAD). In terms of domain architecture, Helicase C-terminal spans 231–393 (TLKNYYVECR…EIKVPTNNSR (163 aa)). Positions 507–557 (AAKDKKRREKEARKLKKMGGRFRNGGGTGRKAEEKKALKRKAEEEDDAQND) are disordered. A compositionally biased stretch (basic residues) spans 510-526 (DKKRREKEARKLKKMGG). The span at 536-549 (RKAEEKKALKRKAE) shows a compositional bias: basic and acidic residues.

The protein belongs to the DEAD box helicase family. DDX55/SPB4 subfamily.

The catalysed reaction is ATP + H2O = ADP + phosphate + H(+). Its function is as follows. Probable ATP-binding RNA helicase. This chain is Probable ATP-dependent RNA helicase DDX55 homolog, found in Caenorhabditis elegans.